The sequence spans 207 residues: Large ribosomal subunit protein bL25 (207 aa).

This sequence belongs to the bacterial ribosomal protein bL25 family. CTC subfamily. Part of the 50S ribosomal subunit; part of the 5S rRNA/L5/L18/L25 subcomplex. Contacts the 5S rRNA. Binds to the 5S rRNA independently of L5 and L18.

Its function is as follows. This is one of the proteins that binds to the 5S RNA in the ribosome where it forms part of the central protuberance. This Orientia tsutsugamushi (strain Ikeda) (Rickettsia tsutsugamushi) protein is Large ribosomal subunit protein bL25.